Consider the following 268-residue polypeptide: Tryptophan synthase alpha chain (268 aa).

Active-site proton acceptor residues include Glu40 and Asp51.

It belongs to the TrpA family. In terms of assembly, tetramer of two alpha and two beta chains.

The catalysed reaction is (1S,2R)-1-C-(indol-3-yl)glycerol 3-phosphate + L-serine = D-glyceraldehyde 3-phosphate + L-tryptophan + H2O. It functions in the pathway amino-acid biosynthesis; L-tryptophan biosynthesis; L-tryptophan from chorismate: step 5/5. In terms of biological role, the alpha subunit is responsible for the aldol cleavage of indoleglycerol phosphate to indole and glyceraldehyde 3-phosphate. The sequence is that of Tryptophan synthase alpha chain from Geobacillus kaustophilus (strain HTA426).